The primary structure comprises 392 residues: tRNA-specific 2-thiouridylase MnmA (392 aa).

Residues 18–25 and Leu44 each bind ATP; that span reads AMSGGVDS. The active-site Nucleophile is Cys112. A disulfide bond links Cys112 and Cys208. Gly136 is an ATP binding site. The tract at residues 158 to 160 is interaction with tRNA; that stretch reads RDQ. The active-site Cysteine persulfide intermediate is Cys208.

Belongs to the MnmA/TRMU family.

It is found in the cytoplasm. The enzyme catalyses S-sulfanyl-L-cysteinyl-[protein] + uridine(34) in tRNA + AH2 + ATP = 2-thiouridine(34) in tRNA + L-cysteinyl-[protein] + A + AMP + diphosphate + H(+). Catalyzes the 2-thiolation of uridine at the wobble position (U34) of tRNA, leading to the formation of s(2)U34. This chain is tRNA-specific 2-thiouridylase MnmA, found in Rhodospirillum centenum (strain ATCC 51521 / SW).